Reading from the N-terminus, the 231-residue chain is uncharacterized protein (231 aa).

3 helical membrane passes run 6-26, 39-59, and 66-86; these read IKLI…YKYI, NIVS…STFS, and FCFQ…GYAF.

Its subcellular location is the cell membrane. This is an uncharacterized protein from Rickettsia prowazekii (strain Madrid E).